The primary structure comprises 151 residues: Centrin-A (151 aa).

2 consecutive EF-hand domains span residues 80-115 (DVYASFEQAFSLFDRDGSGYITFDDLKTVAINLGEA) and 116-151 (RSDSKLYNMIKRADLNGDKKISKIEFIQLLYWKKIY). Asp-93, Asp-95, Ser-97, Tyr-99, Asp-104, Asp-129, Asn-131, Asp-133, Lys-135, and Glu-140 together coordinate Ca(2+).

Belongs to the centrin family.

Its subcellular location is the cytoplasm. It is found in the cytoskeleton. It localises to the microtubule organizing center. The protein localises to the centrosome. The protein resides in the nucleus. Plays a fundamental role in microtubule-organizing center structure and function. The chain is Centrin-A (cenA) from Dictyostelium discoideum (Social amoeba).